We begin with the raw amino-acid sequence, 157 residues long: Succinate dehydrogenase [ubiquinone] cytochrome b small subunit, mitochondrial (157 aa).

A mitochondrion-targeting transit peptide spans 1 to 45 (MAALVLLRAGLARPRGVPTALLRGTLLRHSAVLTAAADRSAPARQ). At 46–61 (SHGGAPQGHGSSKAAS) the chain is on the mitochondrial matrix side. Residues 62 to 83 (LHWTSERAVSALLLGLLPAAYL) form a helical membrane-spanning segment. Topologically, residues 84-88 (YPGPA) are mitochondrial intermembrane. Residues 89 to 109 (VDYSLAAALTLHGHWGLGQVI) form a helical membrane-spanning segment. H100 contributes to the heme b binding site. The Mitochondrial matrix segment spans residues 110 to 118 (TDYVHGDTP). A ubiquinone is bound at residue Y112. Residues 119 to 140 (IKVANTGLYVLSAITFTGLCYF) form a helical membrane-spanning segment. Topologically, residues 141–157 (NYYDVGICKAVAMLWSI) are mitochondrial intermembrane.

Belongs to the CybS family. Component of complex II composed of four subunits: the flavoprotein (FP) SDHA, iron-sulfur protein (IP) SDHB, and a cytochrome b560 composed of SDHC and SDHD.

It is found in the mitochondrion inner membrane. It participates in carbohydrate metabolism; tricarboxylic acid cycle. Membrane-anchoring subunit of succinate dehydrogenase (SDH) that is involved in complex II of the mitochondrial electron transport chain and is responsible for transferring electrons from succinate to ubiquinone (coenzyme Q). SDH also oxidizes malate to the non-canonical enol form of oxaloacetate, enol-oxaloacetate. Enol-oxaloacetate, which is a potent inhibitor of the succinate dehydrogenase activity, is further isomerized into keto-oxaloacetate. The chain is Succinate dehydrogenase [ubiquinone] cytochrome b small subunit, mitochondrial (SDHD) from Gallus gallus (Chicken).